A 553-amino-acid polypeptide reads, in one-letter code: Dihydroxy-acid dehydratase (553 aa).

Residue Asp-78 coordinates Mg(2+). Cys-119 contributes to the [2Fe-2S] cluster binding site. Mg(2+) is bound by residues Asp-120 and Lys-121. Lys-121 is subject to N6-carboxylysine. Cys-193 contacts [2Fe-2S] cluster. Glu-441 provides a ligand contact to Mg(2+). Residue Ser-467 is the Proton acceptor of the active site.

This sequence belongs to the IlvD/Edd family. Homodimer. [2Fe-2S] cluster serves as cofactor. Mg(2+) is required as a cofactor.

The catalysed reaction is (2R)-2,3-dihydroxy-3-methylbutanoate = 3-methyl-2-oxobutanoate + H2O. It carries out the reaction (2R,3R)-2,3-dihydroxy-3-methylpentanoate = (S)-3-methyl-2-oxopentanoate + H2O. It functions in the pathway amino-acid biosynthesis; L-isoleucine biosynthesis; L-isoleucine from 2-oxobutanoate: step 3/4. The protein operates within amino-acid biosynthesis; L-valine biosynthesis; L-valine from pyruvate: step 3/4. Functions in the biosynthesis of branched-chain amino acids. Catalyzes the dehydration of (2R,3R)-2,3-dihydroxy-3-methylpentanoate (2,3-dihydroxy-3-methylvalerate) into 2-oxo-3-methylpentanoate (2-oxo-3-methylvalerate) and of (2R)-2,3-dihydroxy-3-methylbutanoate (2,3-dihydroxyisovalerate) into 2-oxo-3-methylbutanoate (2-oxoisovalerate), the penultimate precursor to L-isoleucine and L-valine, respectively. The sequence is that of Dihydroxy-acid dehydratase from Geobacter sulfurreducens (strain ATCC 51573 / DSM 12127 / PCA).